The chain runs to 88 residues: Apolipoprotein C-I (88 aa).

A signal peptide spans 1–26; it reads MRLILSLPVLVVVLSMVLEGPAPAQA.

The protein belongs to the apolipoprotein C1 family.

The protein localises to the secreted. In terms of biological role, inhibitor of lipoprotein binding to the low density lipoprotein (LDL) receptor, LDL receptor-related protein, and very low density lipoprotein (VLDL) receptor. Associates with high density lipoproteins (HDL) and the triacylglycerol-rich lipoproteins in the plasma and makes up about 10% of the protein of the VLDL and 2% of that of HDL. Appears to interfere directly with fatty acid uptake and is also the major plasma inhibitor of cholesteryl ester transfer protein (CETP). Binds free fatty acids and reduces their intracellular esterification. Modulates the interaction of APOE with beta-migrating VLDL and inhibits binding of beta-VLDL to the LDL receptor-related protein. This chain is Apolipoprotein C-I (APOC1), found in Lycaon pictus (African wild dog).